Consider the following 67-residue polypeptide: MSLLPAVKVLPLGYLGIVLVFSLILRSAMVDFIQDAGKLERIDTYKREAQMIFGAPMWALGHLMGRK.

Positions 1–30 are cleaved as a signal peptide; it reads MSLLPAVKVLPLGYLGIVLVFSLILRSAMV. Positions 31-49 are excised as a propeptide; sequence DFIQDAGKLERIDTYKREA. The residue at position 50 (Gln-50) is a Pyrrolidone carboxylic acid. Position 64 is a methionine amide (Met-64).

The protein belongs to the bombesin/neuromedin-B/ranatensin family. Expressed by the skin dorsal glands.

Its subcellular location is the secreted. Stimulates smooth muscle contraction in isolated rat stomach strip. The chain is Bombesin from Sanguirana varians (Palawan frog).